Reading from the N-terminus, the 52-residue chain is Metchnikowin (52 aa).

The signal sequence occupies residues 1–24; the sequence is MQLNLGAIFLALLGVMATATSVLA. Positions 25–26 are excised as a propeptide; it reads EP. Residues 28–52 are disordered; that stretch reads RHQGPIFDTRPSPFNPNQPRPGPIY. The segment covering 40–52 has biased composition (pro residues); that stretch reads PFNPNQPRPGPIY.

In terms of tissue distribution, hemolymph (at protein level). Highest expression in fat body.

The protein localises to the secreted. Functionally, potent antifungal and antibacterial activity against Gram-positive bacteria. In Drosophila melanogaster (Fruit fly), this protein is Metchnikowin (Mtk).